Consider the following 1872-residue polypeptide: Ral GTPase-activating protein subunit alpha-2 (1872 aa).

Residues S373, S376, and S379 each carry the phosphoserine modification. The span at 446-469 (DKKDVAEEDADKLGLSETDSKEVS) shows a compositional bias: basic and acidic residues. The tract at residues 446–481 (DKKDVAEEDADKLGLSETDSKEVSSESSGHKRSSSW) is disordered. Phosphoserine occurs at positions 486 and 696. 2 disordered regions span residues 711-730 (FRSA…NTVR) and 758-849 (QPVP…TGSD). A Phosphothreonine; by PKB modification is found at T715. Over residues 775-795 (SDSSQGQKVENSQNLSSSEPK) the composition is skewed to polar residues. Basic and acidic residues predominate over residues 796 to 810 (SVQESKGHVTHEHEG). Residues S819 and S820 each carry the phosphoserine modification. The segment covering 824 to 843 (LDLKEESQQTHGRCRERQKS) has biased composition (basic and acidic residues). Phosphoserine is present on S1592. Positions 1634–1842 (LKNLDSRQCR…EERALYLEAI (209 aa)) constitute a Rap-GAP domain.

As to quaternary structure, component of the heterodimeric RalGAP2 complex with RALGAPB. Heterodimerization is required for activity. Highly expressed in lung, liver, testis and thymus with lower levels in brain and heart (at protein level).

The protein localises to the cytoplasm. Its function is as follows. Catalytic subunit of the heterodimeric RalGAP2 complex which acts as a GTPase activator for the Ras-like small GTPases RALA and RALB. This chain is Ral GTPase-activating protein subunit alpha-2, found in Rattus norvegicus (Rat).